A 460-amino-acid chain; its full sequence is V-type ATP synthase beta chain (460 aa).

It belongs to the ATPase alpha/beta chains family.

In terms of biological role, produces ATP from ADP in the presence of a proton gradient across the membrane. The V-type beta chain is a regulatory subunit. In Thermotoga neapolitana (strain ATCC 49049 / DSM 4359 / NBRC 107923 / NS-E), this protein is V-type ATP synthase beta chain.